A 460-amino-acid chain; its full sequence is MALSAAIVLAAGEGTRMRSNKPKVLHAFAGKTFLNRVMDSVAVLNPDTLAVVVHFQAERVAEAARSYDEQVTIVNQDDIPGTGRAVQCAMAQLTEAGKVDGPVLIAASDMPLLDSETLHRLVEFHTASGNGATVLTTILDDPTGYGRIIRDREGNVLRIVEQKDANRSELAVQEVNTSVYVFEASVLTEAIAGLKSNNAQGEFYLTDALETAKAAGKVGAFAAPDPLTVEGVNDRVQLAALSKTYNRRVCERWMRDGVTILDPETTWIEDDVQIGRDATILPGSFLQGHTVVGEDAIVGPYTTLIDTTVDEGAVVERSRVQESHIGARTNIGPWTYLRPGNEFGEDAKAGAFVEMKKAHIGNGTKVPHLSYVGDAQLGDHTNIGGGTITANYDGVHKNSTTIGSGCHVGAGNLFVAPVEVGNNVTTGAGSVVRHAVPSDTMVYSENTQHNVEGWKPAWER.

A pyrophosphorylase region spans residues 1 to 235; sequence MALSAAIVLA…PLTVEGVNDR (235 aa). Residues 9–12, Lys23, Gln76, and 81–82 each bind UDP-N-acetyl-alpha-D-glucosamine; these read LAAG and GT. Position 109 (Asp109) interacts with Mg(2+). The UDP-N-acetyl-alpha-D-glucosamine site is built by Gly146, Glu161, Asn176, and Asn233. Asn233 contacts Mg(2+). The linker stretch occupies residues 236–256; sequence VQLAALSKTYNRRVCERWMRD. Residues 257–460 are N-acetyltransferase; the sequence is GVTILDPETT…VEGWKPAWER (204 aa). UDP-N-acetyl-alpha-D-glucosamine-binding residues include Arg338 and Lys356. The active-site Proton acceptor is His368. Residues Tyr371 and Asn382 each coordinate UDP-N-acetyl-alpha-D-glucosamine. Acetyl-CoA-binding positions include 391–392 and Ala428; that span reads NY.

It in the N-terminal section; belongs to the N-acetylglucosamine-1-phosphate uridyltransferase family. The protein in the C-terminal section; belongs to the transferase hexapeptide repeat family. Homotrimer. Mg(2+) is required as a cofactor.

It localises to the cytoplasm. It catalyses the reaction alpha-D-glucosamine 1-phosphate + acetyl-CoA = N-acetyl-alpha-D-glucosamine 1-phosphate + CoA + H(+). It carries out the reaction N-acetyl-alpha-D-glucosamine 1-phosphate + UTP + H(+) = UDP-N-acetyl-alpha-D-glucosamine + diphosphate. It participates in nucleotide-sugar biosynthesis; UDP-N-acetyl-alpha-D-glucosamine biosynthesis; N-acetyl-alpha-D-glucosamine 1-phosphate from alpha-D-glucosamine 6-phosphate (route II): step 2/2. Its pathway is nucleotide-sugar biosynthesis; UDP-N-acetyl-alpha-D-glucosamine biosynthesis; UDP-N-acetyl-alpha-D-glucosamine from N-acetyl-alpha-D-glucosamine 1-phosphate: step 1/1. It functions in the pathway bacterial outer membrane biogenesis; LPS lipid A biosynthesis. In terms of biological role, catalyzes the last two sequential reactions in the de novo biosynthetic pathway for UDP-N-acetylglucosamine (UDP-GlcNAc). The C-terminal domain catalyzes the transfer of acetyl group from acetyl coenzyme A to glucosamine-1-phosphate (GlcN-1-P) to produce N-acetylglucosamine-1-phosphate (GlcNAc-1-P), which is converted into UDP-GlcNAc by the transfer of uridine 5-monophosphate (from uridine 5-triphosphate), a reaction catalyzed by the N-terminal domain. In Bifidobacterium longum (strain DJO10A), this protein is Bifunctional protein GlmU.